A 431-amino-acid chain; its full sequence is Adenylosuccinate synthetase (431 aa).

Residues 12 to 18 (GDEGKGK) and 40 to 42 (GHT) contribute to the GTP site. Residue Asp13 is the Proton acceptor of the active site. 2 residues coordinate Mg(2+): Asp13 and Gly40. IMP contacts are provided by residues 13 to 16 (DEGK), 38 to 41 (NAGH), Thr131, Arg145, Gln225, Thr240, and Arg304. Catalysis depends on His41, which acts as the Proton donor. 300–306 (TVTGRKR) provides a ligand contact to substrate. GTP contacts are provided by residues Arg306, 332–334 (KLD), and 414–416 (STS).

Belongs to the adenylosuccinate synthetase family. Homodimer. Mg(2+) serves as cofactor.

The protein resides in the cytoplasm. It carries out the reaction IMP + L-aspartate + GTP = N(6)-(1,2-dicarboxyethyl)-AMP + GDP + phosphate + 2 H(+). It participates in purine metabolism; AMP biosynthesis via de novo pathway; AMP from IMP: step 1/2. In terms of biological role, plays an important role in the de novo pathway of purine nucleotide biosynthesis. Catalyzes the first committed step in the biosynthesis of AMP from IMP. In Roseobacter denitrificans (strain ATCC 33942 / OCh 114) (Erythrobacter sp. (strain OCh 114)), this protein is Adenylosuccinate synthetase.